The sequence spans 364 residues: Fructose-bisphosphate aldolase C-A (364 aa).

2 residues coordinate substrate: arginine 56 and lysine 147. Glutamate 188 (proton acceptor) is an active-site residue. The Schiff-base intermediate with dihydroxyacetone-P role is filled by lysine 230.

It belongs to the class I fructose-bisphosphate aldolase family. Homotetramer. Expressed specifically in Purkinje cells in the brain.

The catalysed reaction is beta-D-fructose 1,6-bisphosphate = D-glyceraldehyde 3-phosphate + dihydroxyacetone phosphate. It participates in carbohydrate degradation; glycolysis; D-glyceraldehyde 3-phosphate and glycerone phosphate from D-glucose: step 4/4. This is Fructose-bisphosphate aldolase C-A from Danio rerio (Zebrafish).